Here is a 333-residue protein sequence, read N- to C-terminus: MIPPKQQTALKITPEGRIAAVSSPLPSLQDNELLVCVKSIALNPFDAKSAEMSPTIGATLGCDFAGKIVATGSNANDFNFSIGDRVCGCVFGNNPNRLDNGAFAEYVAVPADLLLRIPEHMDYNEAATLGVGLATVGMSLYHCLRLPMKPEQAGKSPSGYAAITTCSPHNFNLVKSLGATAAFDYHSPTCGRQIRDFSSGNLWYALDCITDTRSMAVCYEAIGPSGGRYLSLDPFPIRGHTRRSVKPNWVLSVTMYNQPIPWKRPFKRDACPQDLEFAKSWFQIAQRMIDAGEIRPHTSDVKAGGWNGIPGGLELLQKGEVSGRKLVYEVASH.

Residue 45–48 (FDAK) coordinates NADP(+). 131-138 (VGLATVGM) provides a ligand contact to substrate. Residues 167 to 170 (SPHN), Y185, and 232 to 233 (LD) contribute to the NADP(+) site. 252-256 (SVTMY) is a substrate binding site. 321–322 (VS) serves as a coordination point for NADP(+).

The protein belongs to the zinc-containing alcohol dehydrogenase family. As to quaternary structure, monomer.

Its pathway is secondary metabolite biosynthesis. In terms of biological role, trans-enoyl reductase; part of the gene cluster that mediates the biosynthesis of aspyridones. The polyketide-amino acid backbone preaspyridone A is first assembled by the PKS-NRPS hybrid apdA. The assembly of preaspyridone A is initiated by loading of malonyl-CoA onto apdA, followed by decarboxylation to yield the acetyl starter unit. The growing polyketide chain then elongates into a tetraketide. The adpA PKS module catalyzes three Claisen condensations, as well as beta-keto processing and methylation. Alpha-methylation step during polyketide synthesis is a prerequisite and a key checkpoint for chain transfer between PKS and NRPS modules. The downstream NRPS module contains the condensation (C), adenylation (A), and thiolation (T) domains and catalyzes the incorporation of tyrosine via the formation of the L-tyrosinyl-thioester and the amide linkage between L-tyrosinyl-thioester and the tetraketide. The bimodular assembly line is terminated with a reductase (R) domain that facilitates formation and release of the tetramic acid product. Because apdA lacks a designated enoylreductase (ER) domain, the required activity is provided the enoyl reductase apdC. ApdC appears to operate with different stereoselectivity in different PKS cycle. Combined with apdC, apdA is proposed to synthesize preaspyridone A via about 20 enzymatic steps. A number of oxidative steps performed successively by the cytochrome P450 monooxygenases apdE and apdB are required for the conversion of preaspyridone A to aspyridone A. The cytochrome P450 monooxygenase apdE is responsible for the oxidative dephenylation of preaspyridone A. Finally, the predicted FAD-dependent monooxygenase apdD and the acyl-CoA dehydrogenase apdG may be involved in the transformation of aspyridone A into aspyridone B. In Emericella nidulans (strain FGSC A4 / ATCC 38163 / CBS 112.46 / NRRL 194 / M139) (Aspergillus nidulans), this protein is Trans-enoyl reductase apdC.